Here is a 67-residue protein sequence, read N- to C-terminus: DNA-directed RNA polymerase subunit omega (67 aa).

Belongs to the RNA polymerase subunit omega family. The RNAP catalytic core consists of 2 alpha, 1 beta, 1 beta' and 1 omega subunit. When a sigma factor is associated with the core the holoenzyme is formed, which can initiate transcription.

It carries out the reaction RNA(n) + a ribonucleoside 5'-triphosphate = RNA(n+1) + diphosphate. Its function is as follows. Promotes RNA polymerase assembly. Latches the N- and C-terminal regions of the beta' subunit thereby facilitating its interaction with the beta and alpha subunits. The chain is DNA-directed RNA polymerase subunit omega from Listeria monocytogenes serotype 4a (strain HCC23).